A 204-amino-acid chain; its full sequence is Partner of Y14 and mago (204 aa).

2 disordered regions span residues 1-27 (MSTYLQSSEGKFIPATKRPDGTWRKAR) and 52-142 (QRQA…LDAP). Residues 68–90 (ESKKEREKQERTRAKKQEKESGR) show a composition bias toward basic and acidic residues. Positions 120–130 (PSGSRDINSIS) are enriched in polar residues. Residues 149-181 (AKQLKKLRKKIREIEQIESRIQAGEQKKLDKDQ) are a coiled coil.

It belongs to the pym family. Interacts (via N-terminus) with mago and tsu/Y14; the interaction is direct.

The protein localises to the cytoplasm. It localises to the nucleus. Its function is as follows. Regulator of the exon junction complex (EJC), a multiprotein complex that associates immediately upstream of the exon-exon junction on mRNAs and serves as a positional landmarks for the intron exon structure of genes and directs post-transcriptional processes in the cytoplasm such as mRNA export, nonsense-mediated mRNA decay (NMD) or translation. This Drosophila simulans (Fruit fly) protein is Partner of Y14 and mago.